We begin with the raw amino-acid sequence, 258 residues long: Indole-3-glycerol phosphate synthase (258 aa).

The protein belongs to the TrpC family.

It catalyses the reaction 1-(2-carboxyphenylamino)-1-deoxy-D-ribulose 5-phosphate + H(+) = (1S,2R)-1-C-(indol-3-yl)glycerol 3-phosphate + CO2 + H2O. The protein operates within amino-acid biosynthesis; L-tryptophan biosynthesis; L-tryptophan from chorismate: step 4/5. The protein is Indole-3-glycerol phosphate synthase of Legionella pneumophila (strain Lens).